A 205-amino-acid polypeptide reads, in one-letter code: Large ribosomal subunit protein uL4 (205 aa).

The segment at 56–76 (VSGTTAKPYRQKHTGRARQGS) is disordered.

Belongs to the universal ribosomal protein uL4 family. As to quaternary structure, part of the 50S ribosomal subunit.

Its function is as follows. One of the primary rRNA binding proteins, this protein initially binds near the 5'-end of the 23S rRNA. It is important during the early stages of 50S assembly. It makes multiple contacts with different domains of the 23S rRNA in the assembled 50S subunit and ribosome. In terms of biological role, forms part of the polypeptide exit tunnel. The chain is Large ribosomal subunit protein uL4 from Ehrlichia ruminantium (strain Welgevonden).